Reading from the N-terminus, the 129-residue chain is Glycine cleavage system H protein (129 aa).

Positions 24–106 (TYTVGITEHA…YAGGWIFKIK (83 aa)) constitute a Lipoyl-binding domain. Lysine 65 carries the N6-lipoyllysine modification.

The protein belongs to the GcvH family. In terms of assembly, the glycine cleavage system is composed of four proteins: P, T, L and H. (R)-lipoate serves as cofactor.

The glycine cleavage system catalyzes the degradation of glycine. The H protein shuttles the methylamine group of glycine from the P protein to the T protein. In Escherichia coli O127:H6 (strain E2348/69 / EPEC), this protein is Glycine cleavage system H protein.